Reading from the N-terminus, the 201-residue chain is Dephospho-CoA kinase (201 aa).

In terms of domain architecture, DPCK spans Thr4–Lys201. Ala12–Thr17 lines the ATP pocket.

The protein belongs to the CoaE family.

It is found in the cytoplasm. It carries out the reaction 3'-dephospho-CoA + ATP = ADP + CoA + H(+). It functions in the pathway cofactor biosynthesis; coenzyme A biosynthesis; CoA from (R)-pantothenate: step 5/5. Its function is as follows. Catalyzes the phosphorylation of the 3'-hydroxyl group of dephosphocoenzyme A to form coenzyme A. In Geobacillus kaustophilus (strain HTA426), this protein is Dephospho-CoA kinase.